Consider the following 173-residue polypeptide: tRNA-specific adenosine deaminase (173 aa).

Positions 9-121 (EFDEKMMRYA…DYKTGAIGSR (113 aa)) constitute a CMP/dCMP-type deaminase domain. A Zn(2+)-binding site is contributed by His-61. The Proton donor role is filled by Glu-63. Zn(2+)-binding residues include Cys-91 and Cys-94.

Belongs to the cytidine and deoxycytidylate deaminase family. In terms of assembly, homodimer. Zn(2+) serves as cofactor.

It catalyses the reaction adenosine(34) in tRNA + H2O + H(+) = inosine(34) in tRNA + NH4(+). Catalyzes the deamination of adenosine to inosine at the wobble position 34 of tRNA(Arg2). The sequence is that of tRNA-specific adenosine deaminase from Haemophilus influenzae (strain ATCC 51907 / DSM 11121 / KW20 / Rd).